A 556-amino-acid polypeptide reads, in one-letter code: Hydroxylamine reductase (556 aa).

[4Fe-4S] cluster is bound by residues Cys5, Cys8, Cys17, and Cys23. Hybrid [4Fe-2O-2S] cluster contacts are provided by His249, Glu273, Cys317, Cys409, Cys437, Cys462, Glu497, and Lys499. Cys409 bears the Cysteine persulfide mark.

The protein belongs to the HCP family. [4Fe-4S] cluster serves as cofactor. Hybrid [4Fe-2O-2S] cluster is required as a cofactor.

It is found in the cytoplasm. The enzyme catalyses A + NH4(+) + H2O = hydroxylamine + AH2 + H(+). In terms of biological role, catalyzes the reduction of hydroxylamine to form NH(3) and H(2)O. This is Hydroxylamine reductase from Kosmotoga olearia (strain ATCC BAA-1733 / DSM 21960 / TBF 19.5.1).